We begin with the raw amino-acid sequence, 830 residues long: uncharacterized protein (830 aa).

The span at 1–12 shows a compositional bias: basic and acidic residues; that stretch reads MEKASKNKESGV. Residues 1–61 form a disordered region; the sequence is MEKASKNKES…SIKSKNKKKT (61 aa). Polar residues predominate over residues 15-25; sequence ANNSFLQNFGV. In terms of domain architecture, Helicase ATP-binding spans 249-433; it reads TVSKSSASGG…YSLVKFLHIN (185 aa). ATP is bound at residue 262–269; the sequence is DDMGLGKT. The DEAH box signature appears at 384–387; that stretch reads DEAH. The Helicase C-terminal domain occupies 662-816; the sequence is EEDDTVRGLR…KSVFTSKKLT (155 aa). Ser712 is subject to Phosphoserine.

The protein belongs to the SNF2/RAD54 helicase family.

Its subcellular location is the nucleus. This is an uncharacterized protein from Schizosaccharomyces pombe (strain 972 / ATCC 24843) (Fission yeast).